We begin with the raw amino-acid sequence, 622 residues long: Palmitoyltransferase ZDHHC17 (622 aa).

Residues 1 to 294 (MADGPDEYDT…LKADKEFRQK (294 aa)) lie on the Cytoplasmic side of the membrane. Residues 1-295 (MADGPDEYDT…KADKEFRQKV (295 aa)) are necessary and sufficient for interaction with DNAJC5 and SNAP25. ANK repeat units lie at residues 41-76 (THVD…VRQP), 79-108 (ENVT…IVDQ), 113-142 (LNST…DPSL), 146-175 (EGCS…DVDM), 179-209 (NGMT…SVNL), 214-243 (HKNT…NVDA), and 247-276 (KGES…AKGY). The next 2 helical transmembrane spans lie at 295 to 315 (VMLG…DLNI) and 316 to 336 (DSWL…QFLS). Topologically, residues 337-347 (KSFFDHSMHSA) are lumenal. The chain crosses the membrane as a helical span at residues 348-368 (LPLGIYLATKFWMYVTWFFWF). Residues 369–371 (WND) lie on the Cytoplasmic side of the membrane. Residues 372–392 (LSFLSIHLPFLANSVALFYNF) traverse the membrane as a helical segment. Over 393–470 (GKSWKSDPGI…GNCVGAGNHR (78 aa)) the chain is Lumenal. Residues 427-477 (IFCSTCLIRKPVRSKHCGVCNRCIAKFDHHCPWVGNCVGAGNHRYFMGYLF) enclose the DHHC domain. Catalysis depends on Cys457, which acts as the S-palmitoyl cysteine intermediate. Residues 471–491 (YFMGYLFFLLFMICWMIYGCV) form a helical membrane-spanning segment. Topologically, residues 492-506 (SYWGLHCETTYTKDG) are cytoplasmic. A helical transmembrane segment spans residues 507–526 (FWTYITQIATCSPWMFWMFL). Topologically, residues 527–529 (NSV) are lumenal. Residues 530-552 (FHFMWVAVLLMCQMYQITCLGIT) traverse the membrane as a helical segment. Residues 553 to 622 (TNERMNARRY…QISGSGYQLV (70 aa)) are Cytoplasmic-facing.

It belongs to the DHHC palmitoyltransferase family. AKR/ZDHHC17 subfamily. Interacts (via ANK repeats) with numerous proteins (via the consensus sequence motif [VIAP]-[VIT]-x-x-Q-P). Interacts (via ANK repeats) with CLIP3. Interacts (via ANK repeats) with HTT. Interacts (via ANK repeats) with DNAJC5 (via C-terminus). Interacts (via ANK repeats) with MAP6. Interacts (via ANK repeats) with SNAP23. Interacts (via ANK repeats) with SNAP25. Interacts (via ANK repeats) with EVL. Interacts with SPRED1 and SPRED3. Interacts with GPM6A and OPTN. May interact (via ANK repeats) with SPRED2. May interact with NTRK1; may regulate its localization and function. In terms of processing, autopalmitoylated. Autopalmitoylation has a regulatory role in ZDHHC17-mediated Mg(2+) transport.

It is found in the golgi apparatus membrane. Its subcellular location is the cytoplasmic vesicle membrane. The protein localises to the presynaptic cell membrane. It carries out the reaction L-cysteinyl-[protein] + hexadecanoyl-CoA = S-hexadecanoyl-L-cysteinyl-[protein] + CoA. It catalyses the reaction L-cysteinyl-[protein] + tetradecanoyl-CoA = S-tetradecanoyl-L-cysteinyl-[protein] + CoA. The enzyme catalyses L-cysteinyl-[protein] + octadecanoyl-CoA = S-octadecanoyl-L-cysteinyl-[protein] + CoA. Palmitoyltransferase that catalyzes the addition of palmitate onto various protein substrates and is involved in a variety of cellular processes. Has no stringent fatty acid selectivity and in addition to palmitate can also transfer onto target proteins myristate from tetradecanoyl-CoA and stearate from octadecanoyl-CoA. Palmitoyltransferase specific for a subset of neuronal proteins, including SNAP25, DLG4/PSD95, GAD2, SYT1 and HTT. Also palmitoylates neuronal protein GPM6A as well as SPRED1 and SPRED3. Could also play a role in axonogenesis through the regulation of NTRK1 and the downstream ERK1/ERK2 signaling cascade. May be involved in the sorting or targeting of critical proteins involved in the initiating events of endocytosis at the plasma membrane. May play a role in Mg(2+) transport. Could also palmitoylate DNAJC5 and regulate its localization to the Golgi membrane. Palmitoylates CASP6, thereby preventing its dimerization and subsequent activation. The protein is Palmitoyltransferase ZDHHC17 of Rattus norvegicus (Rat).